Here is a 244-residue protein sequence, read N- to C-terminus: T-cell immunoreceptor with Ig and ITIM domains (244 aa).

Positions 1–21 (MRWCLLLIWAQGLRQAPLASG) are cleaved as a signal peptide. The 103-residue stretch at 22-124 (MMTGTIETTG…DGTYTGRIFL (103 aa)) folds into the Ig-like V-type domain. Over 22-141 (MMTGTIETTG…AEHGARFQIP (120 aa)) the chain is Extracellular. N-linked (GlcNAc...) asparagine glycans are attached at residues Asn32 and Asn101. The segment at 32-42 (NISAEKGGSII) is homodimerization. A disulfide bridge connects residues Cys45 and Cys108. A helical transmembrane segment spans residues 142–162 (LLGAMAATLVVICTAVIVVVA). Residues 163 to 244 (LTRKKKALRI…GNCSFFTETG (82 aa)) lie on the Cytoplasmic side of the membrane. Tyr225 is subject to Phosphotyrosine. The ITIM motif signature appears at 229–234 (LSYRSL).

As to quaternary structure, homodimer in cis; binds with high affinity to PVR, forming a heterotetrameric assembly of two TIGIT and two PVR molecules. Binds with lower affinity to NECTIN2 and NECTIN3. Interacts with GRB2. Interacts with NECTIN4. In terms of tissue distribution, expressed at low levels on peripheral memory and regulatory CD4+ T-cells and NK cells and is up-regulated following activation of these cells (at protein level).

The protein localises to the cell membrane. Its function is as follows. Inhibitory receptor that plays a role in the modulation of immune responses. Suppresses T-cell activation by promoting the generation of mature immunoregulatory dendritic cells. Upon binding to its ligands PVR/CD155 or NECTIN2/CD112, which are expressed on antigen-presenting cells, sends inhibitory signals to the T-cell or NK cell. Mechanistically, interaction with ligand leads to phosphorylation of the cytoplasmic tail by Src family tyrosine kinases such as FYN or LCK, allowing subsequent binding to adapter GRB2 and SHIP1/INPP5D. In turn, inhibits PI3K and MAPK signaling cascades. In addition, associates with beta-arrestin-2/ARRB2 to recruit SHIP1/INPP5D that suppresses autoubiquitination of TRAF6 and subsequently inhibits NF-kappa-B signaling pathway. Also acts as a receptor for NECTIN4 to inhibit NK cell cytotoxicity. The sequence is that of T-cell immunoreceptor with Ig and ITIM domains (TIGIT) from Homo sapiens (Human).